The chain runs to 462 residues: Proline--tRNA ligase (462 aa).

This sequence belongs to the class-II aminoacyl-tRNA synthetase family. ProS type 3 subfamily. Homodimer.

Its subcellular location is the cytoplasm. The catalysed reaction is tRNA(Pro) + L-proline + ATP = L-prolyl-tRNA(Pro) + AMP + diphosphate. Functionally, catalyzes the attachment of proline to tRNA(Pro) in a two-step reaction: proline is first activated by ATP to form Pro-AMP and then transferred to the acceptor end of tRNA(Pro). This chain is Proline--tRNA ligase, found in Thermoplasma volcanium (strain ATCC 51530 / DSM 4299 / JCM 9571 / NBRC 15438 / GSS1).